The sequence spans 1146 residues: Integrin alpha-PS1 (1146 aa).

A signal peptide spans M1–T30. Residues C31 to W1085 lie on the Extracellular side of the membrane. FG-GAP repeat units follow at residues Q38–C105, L121–V186, R193–R245, H254–D303, N304–M366, K367–S422, and E432–L494. 3 N-linked (GlcNAc...) asparagine glycosylation sites follow: N68, N86, and N147. N-linked (GlcNAc...) asparagine glycans are attached at residues N470, N511, N657, N680, N711, N718, N761, and N928. Positions Y938–V958 are disordered. Basic and acidic residues predominate over residues S942–Q952. An N-linked (GlcNAc...) asparagine glycan is attached at N1027. The helical transmembrane segment at L1086–L1106 threads the bilayer. Residues W1107 to F1146 lie on the Cytoplasmic side of the membrane.

Belongs to the integrin alpha chain family. In terms of assembly, heterodimer of an alpha and a beta subunit. The alpha subunit is composed of a heavy and a light chain linked by a disulfide bond. Alpha-PS1 associates with beta-PS. Expressed in follicle cells (at protein level). At syncytial blastoderm stage, expressed in the ectoderm but not in the mesodermal precursors. At embryonic stage 7, expressed in dorsal and ventrolateral ectoderm and in some yolk nuclei. At late stage 10, expression is homogeneous in the ectoderm and is particularly abundant in the anterior and posterior midgut primordia. At stage 11, strongly expressed in a metameric pattern in the ectoderm, in the proctodeum and in the posterior midgut primordium. At stage 12, accumulates at the segment boundaries that start to become morphologically visible, similar expression pattern is observed in the central nervous system. In third larval instar wing imaginal disk, strongly expressed in the dorsal compartment, in the adepithelial cells and in patches on the peripodial membrane covering the imaginal disk to the outside.

The protein resides in the apical cell membrane. It is found in the lateral cell membrane. It localises to the basal cell membrane. In terms of biological role, integrin alpha-PS1/beta-PS is a receptor for laminin. This chain is Integrin alpha-PS1 (mew), found in Drosophila melanogaster (Fruit fly).